A 266-amino-acid polypeptide reads, in one-letter code: Glutamate racemase (266 aa).

Residues aspartate 9–serine 10 and tyrosine 41–glycine 42 each bind substrate. The active-site Proton donor/acceptor is the cysteine 72. Substrate is bound at residue asparagine 73–threonine 74. The active-site Proton donor/acceptor is cysteine 183. A substrate-binding site is contributed by threonine 184–histidine 185.

It belongs to the aspartate/glutamate racemases family.

The catalysed reaction is L-glutamate = D-glutamate. It participates in cell wall biogenesis; peptidoglycan biosynthesis. In terms of biological role, provides the (R)-glutamate required for cell wall biosynthesis. In Listeria monocytogenes serotype 4b (strain CLIP80459), this protein is Glutamate racemase.